A 1066-amino-acid polypeptide reads, in one-letter code: Beta-galactosidase (1066 aa).

Positions 110 and 209 each coordinate substrate. Position 209 (Asp209) interacts with Na(+). Mg(2+) contacts are provided by Glu432, His434, and Glu477. Substrate contacts are provided by residues Glu477 and 553–556 (EYAH). The active-site Proton donor is the Glu477. Glu553 (nucleophile) is an active-site residue. Asn613 lines the Mg(2+) pocket. Positions 617 and 620 each coordinate Na(+). Positions 620 and 1041 each coordinate substrate.

It belongs to the glycosyl hydrolase 2 family. In terms of assembly, homotetramer. Mg(2+) is required as a cofactor. Na(+) serves as cofactor.

The catalysed reaction is Hydrolysis of terminal non-reducing beta-D-galactose residues in beta-D-galactosides.. The polypeptide is Beta-galactosidase (Yersinia pseudotuberculosis serotype O:1b (strain IP 31758)).